The chain runs to 462 residues: Glutamate--tRNA ligase 2 (462 aa).

Residues 8 to 18 (PSPTGLLHVGG) carry the 'HIGH' region motif. A 'KMSKS' region motif is present at residues 227–231 (PLSKR). Lys230 serves as a coordination point for ATP.

The protein belongs to the class-I aminoacyl-tRNA synthetase family. Glutamate--tRNA ligase type 1 subfamily. As to quaternary structure, monomer.

The protein resides in the cytoplasm. It catalyses the reaction tRNA(Glu) + L-glutamate + ATP = L-glutamyl-tRNA(Glu) + AMP + diphosphate. Its function is as follows. Catalyzes the attachment of glutamate to tRNA(Glu) in a two-step reaction: glutamate is first activated by ATP to form Glu-AMP and then transferred to the acceptor end of tRNA(Glu). This is Glutamate--tRNA ligase 2 from Thermosipho melanesiensis (strain DSM 12029 / CIP 104789 / BI429).